A 658-amino-acid polypeptide reads, in one-letter code: Transport protein particle subunit trs85-1 (658 aa).

It belongs to the TRS85 family. In terms of assembly, part of the multisubunit TRAPP (transport protein particle) complexes I and II.

The protein resides in the golgi apparatus. It localises to the cis-Golgi network. Component of the TRAPP I and TRAPP II complexes. TRAPP I plays a key role in the late stages of endoplasmic reticulum to Golgi traffic. TRAPP II seems to play a role in intra-Golgi transport. Has a role late in meiosis following DNA replication. The protein is Transport protein particle subunit trs85-1 (trs85-1) of Schizosaccharomyces pombe (strain 972 / ATCC 24843) (Fission yeast).